Consider the following 255-residue polypeptide: MMHDDPNEAGLPPHNDAIPDETAEGADEVNPLHHRRIRSFVTRAGRVSTGQRRALDEFGPRFVVPYAPEMPDWDAIFGRSAPRILEIGFGMGASTAEIAAHRPSDDFLGVEVHEPGVGALLKLIGEQGLSNIRIIQHDAVEVLEHMIAPASLDGVHIFFPDPWHKARHHKRRLIQPPLVAHLASRLKPGAYLHCATDWQNYAEQMLEVLGAEPTLENTAADYAPRPDYRPVTKFERRGLRLGHGVWDLVFRKRAD.

The interval 1-31 (MMHDDPNEAGLPPHNDAIPDETAEGADEVNP) is disordered. Residues 18–27 (IPDETAEGAD) show a composition bias toward acidic residues. Residues E86, E111, D138, and D161 each coordinate S-adenosyl-L-methionine. D161 is a catalytic residue. Substrate is bound by residues K165, D197, and 232 to 235 (TKFE).

The protein belongs to the class I-like SAM-binding methyltransferase superfamily. TrmB family.

It catalyses the reaction guanosine(46) in tRNA + S-adenosyl-L-methionine = N(7)-methylguanosine(46) in tRNA + S-adenosyl-L-homocysteine. Its pathway is tRNA modification; N(7)-methylguanine-tRNA biosynthesis. In terms of biological role, catalyzes the formation of N(7)-methylguanine at position 46 (m7G46) in tRNA. This chain is tRNA (guanine-N(7)-)-methyltransferase, found in Burkholderia cenocepacia (strain HI2424).